The following is a 406-amino-acid chain: Propionate kinase (406 aa).

ATP contacts are provided by Asn11 and Lys18. A Mg(2+)-binding site is contributed by Asn11. Arg86 contributes to the substrate binding site. Asp143 functions as the Proton donor/acceptor in the catalytic mechanism. Residues His175, 203-207, 278-280, and 326-330 contribute to the ATP site; these read HLGNG, DMR, and GIGEN.

Belongs to the acetokinase family. TdcD subfamily. In terms of assembly, homodimer. Requires Mg(2+) as cofactor.

It catalyses the reaction propanoate + ATP = propanoyl phosphate + ADP. It functions in the pathway amino-acid degradation; L-threonine degradation via propanoate pathway; propanoate from L-threonine: step 4/4. In terms of biological role, catalyzes the conversion of propionyl phosphate and ADP to propionate and ATP. This chain is Propionate kinase, found in Yersinia enterocolitica serotype O:8 / biotype 1B (strain NCTC 13174 / 8081).